The primary structure comprises 340 residues: Glyceraldehyde-3-phosphate dehydrogenase, cytosolic (340 aa).

NAD(+) is bound by residues 16 to 17 (RI), Asp38, and Arg85. D-glyceraldehyde 3-phosphate is bound by residues 156–158 (SCT), Thr187, 216–217 (TG), and Arg239. Residue Cys157 is the Nucleophile of the active site. Asn321 serves as a coordination point for NAD(+).

The protein belongs to the glyceraldehyde-3-phosphate dehydrogenase family. Homotetramer.

Its subcellular location is the cytoplasm. The enzyme catalyses D-glyceraldehyde 3-phosphate + phosphate + NAD(+) = (2R)-3-phospho-glyceroyl phosphate + NADH + H(+). Its pathway is carbohydrate degradation; glycolysis; pyruvate from D-glyceraldehyde 3-phosphate: step 1/5. Its function is as follows. Key enzyme in glycolysis that catalyzes the first step of the pathway by converting D-glyceraldehyde 3-phosphate (G3P) into 3-phospho-D-glyceroyl phosphate. Essential for the maintenance of cellular ATP levels and carbohydrate metabolism. The chain is Glyceraldehyde-3-phosphate dehydrogenase, cytosolic from Taxus baccata (English yew).